Reading from the N-terminus, the 922-residue chain is DNA gyrase subunit A (922 aa).

Residues 34-534 (LPDVRDGLKP…SSAEINIEDL (501 aa)) form the Topo IIA-type catalytic domain. The O-(5'-phospho-DNA)-tyrosine intermediate role is filled by tyrosine 122. The GyrA-box signature appears at 561 to 567 (QRRGGRG). 2 disordered regions span residues 715-763 (MQPM…VRPM) and 899-922 (IDGEVSEGTDTAPDAGSAAADPEE). Positions 723 to 743 (DDVDGDDESVIDAGNDDDGSD) are enriched in acidic residues.

The protein belongs to the type II topoisomerase GyrA/ParC subunit family. Heterotetramer, composed of two GyrA and two GyrB chains. In the heterotetramer, GyrA contains the active site tyrosine that forms a transient covalent intermediate with DNA, while GyrB binds cofactors and catalyzes ATP hydrolysis.

It localises to the cytoplasm. It carries out the reaction ATP-dependent breakage, passage and rejoining of double-stranded DNA.. Functionally, a type II topoisomerase that negatively supercoils closed circular double-stranded (ds) DNA in an ATP-dependent manner to modulate DNA topology and maintain chromosomes in an underwound state. Negative supercoiling favors strand separation, and DNA replication, transcription, recombination and repair, all of which involve strand separation. Also able to catalyze the interconversion of other topological isomers of dsDNA rings, including catenanes and knotted rings. Type II topoisomerases break and join 2 DNA strands simultaneously in an ATP-dependent manner. This chain is DNA gyrase subunit A, found in Aeromonas salmonicida.